Reading from the N-terminus, the 71-residue chain is MDKTTVYLPDELKAAVKRAARQRGVSEAQVIRESIRAAVGGAKPPPRGGLYAGSEPIARRVDELLAGFGER.

Antitoxin component of a type II toxin-antitoxin (TA) system. Upon expression in M.smegmatis neutralizes the effect of cognate toxin VapC26. In Mycobacterium tuberculosis (strain ATCC 25618 / H37Rv), this protein is Antitoxin VapB26 (vapB26).